We begin with the raw amino-acid sequence, 246 residues long: Carboxy-S-adenosyl-L-methionine synthase (246 aa).

S-adenosyl-L-methionine is bound by residues Tyr-39, 64–66, 89–90, 121–122, Asn-136, and Arg-203; these read GCS, DN, and DI.

Belongs to the class I-like SAM-binding methyltransferase superfamily. Cx-SAM synthase family. Homodimer.

It carries out the reaction prephenate + S-adenosyl-L-methionine = carboxy-S-adenosyl-L-methionine + 3-phenylpyruvate + H2O. In terms of biological role, catalyzes the conversion of S-adenosyl-L-methionine (SAM) to carboxy-S-adenosyl-L-methionine (Cx-SAM). The sequence is that of Carboxy-S-adenosyl-L-methionine synthase from Pseudomonas aeruginosa (strain UCBPP-PA14).